The primary structure comprises 531 residues: 2,3-bisphosphoglycerate-independent phosphoglycerate mutase (531 aa).

Residues aspartate 15 and serine 65 each coordinate Mn(2+). Serine 65 functions as the Phosphoserine intermediate in the catalytic mechanism. Residues histidine 126, 155–156 (RD), arginine 187, arginine 193, 257–260 (RPDR), and lysine 330 each bind substrate. 5 residues coordinate Mn(2+): aspartate 397, histidine 401, aspartate 438, histidine 439, and histidine 456.

It belongs to the BPG-independent phosphoglycerate mutase family. Monomer. Mn(2+) is required as a cofactor.

It carries out the reaction (2R)-2-phosphoglycerate = (2R)-3-phosphoglycerate. Its pathway is carbohydrate degradation; glycolysis; pyruvate from D-glyceraldehyde 3-phosphate: step 3/5. In terms of biological role, catalyzes the interconversion of 2-phosphoglycerate and 3-phosphoglycerate. The polypeptide is 2,3-bisphosphoglycerate-independent phosphoglycerate mutase (Thermosynechococcus vestitus (strain NIES-2133 / IAM M-273 / BP-1)).